A 525-amino-acid chain; its full sequence is Adenosine deaminase AGSA (525 aa).

The first 25 residues, 1–25 (MSSFSTHNFVAIATFVCWFCCLATA), serve as a signal peptide directing secretion. The N-linked (GlcNAc...) asparagine glycan is linked to Asn-81. Residues His-117 and His-119 each contribute to the Zn(2+) site. Asp-120 contributes to the substrate binding site. Asn-132 carries N-linked (GlcNAc...) asparagine glycosylation. A disulfide bond links Cys-142 and Cys-163. The N-linked (GlcNAc...) asparagine glycan is linked to Asn-188. Substrate-binding positions include 207-214 (WVRFNKYF) and Gly-329. N-linked (GlcNAc...) asparagine glycosylation is present at Asn-334. His-361 provides a ligand contact to Zn(2+). Residue Glu-364 is the Proton donor of the active site. His-389 serves as the catalytic Proton acceptor. Position 446 (Asp-446) interacts with Zn(2+). Residue Asp-447 participates in substrate binding.

It belongs to the metallo-dependent hydrolases superfamily. Adenosine and AMP deaminases family. ADGF subfamily. Zn(2+) is required as a cofactor. Detected in egg cordons and in the developing central nervous system. Not detected in adult central nervous system (at protein level). Atrial gland.

Its subcellular location is the secreted. The catalysed reaction is adenosine + H2O + H(+) = inosine + NH4(+). Adenosine deaminase that may contribute to the degradation of extracellular adenosine, a signaling molecule that controls a variety of cellular responses. May play a role in the regulation of cell proliferation. This Aplysia californica (California sea hare) protein is Adenosine deaminase AGSA.